We begin with the raw amino-acid sequence, 152 residues long: Deoxyuridine 5'-triphosphate nucleotidohydrolase (152 aa).

Substrate is bound by residues 71-73, asparagine 84, 88-90, and methionine 98; these read RSG and LID.

This sequence belongs to the dUTPase family. It depends on Mg(2+) as a cofactor.

The catalysed reaction is dUTP + H2O = dUMP + diphosphate + H(+). The protein operates within pyrimidine metabolism; dUMP biosynthesis; dUMP from dCTP (dUTP route): step 2/2. Its function is as follows. This enzyme is involved in nucleotide metabolism: it produces dUMP, the immediate precursor of thymidine nucleotides and it decreases the intracellular concentration of dUTP so that uracil cannot be incorporated into DNA. The protein is Deoxyuridine 5'-triphosphate nucleotidohydrolase of Klebsiella pneumoniae (strain 342).